A 979-amino-acid polypeptide reads, in one-letter code: Collagen alpha-2(I) chain (979 aa).

The interval 1-979 (SGGFDFSFLP…FGYEGDFYRA (979 aa)) is disordered. 4-hydroxyproline is present on residues proline 10, proline 13, proline 38, and proline 44. Positions 24 to 70 (LGPGPMGLMGPRGPPGASGAPGPQGFQGPAGEPGEPGQTGPAGARGP) are enriched in low complexity. Lysine 99 carries the post-translational modification 5-hydroxylysine; alternate. Lysine 99 carries O-linked (Gal...) hydroxylysine; alternate glycosylation. Composition is skewed to low complexity over residues 147–176 (VGAP…SAGP), 222–263 (PGAN…AGSK), 272–282 (SAGPQGPPGSS), and 312–331 (RAGV…AGVR). Proline 334 and proline 337 each carry 4-hydroxyproline. A compositionally biased stretch (low complexity) spans 363 to 382 (LPGIDGRPGPIGPAGARGEA). The segment covering 427–436 (GVQGGKGEQG) has biased composition (gly residues). Low complexity predominate over residues 483–500 (PGESGAVGPSGAIGSRGP). Residues 517–527 (GAPGGSGGLPG) show a composition bias toward gly residues. 2 stretches are compositionally biased toward low complexity: residues 550–594 (VGTT…PRGS) and 601–621 (VGPA…QPGA). Basic and acidic residues predominate over residues 622–631 (KGERGTKGPK). Residues 639-649 (PTGPVGSAGPA) show a composition bias toward low complexity. Residues 659–668 (GSRGDGGPPG) are compositionally biased toward gly residues. Over residues 669-679 (ATGFPGAAGRT) the composition is skewed to low complexity. Residues 710-724 (GPVGRGETGAGGPPG) show a composition bias toward gly residues. 2 stretches are compositionally biased toward low complexity: residues 725 to 759 (FTGE…LGLP) and 767 to 777 (LPGVAGAVGEP). The span at 778–788 (GPLGIGPPGAR) shows a compositional bias: gly residues. Residues 840–855 (EPGPVGSVGPVGALGP) are compositionally biased toward low complexity. Basic and acidic residues predominate over residues 865 to 876 (RGDKGEPGDKGP). A compositionally biased stretch (pro residues) spans 949 to 961 (SGPPGPPGPPGPP).

It belongs to the fibrillar collagen family. Trimers of one alpha 2(I) and two alpha 1(I) chains. Interacts (via C-terminus) with TMEM131 (via PapD-L domain); the interaction is direct and is involved in assembly and TRAPPIII ER-to-Golgi transport complex-dependent secretion of collagen. Post-translationally, prolines at the third position of the tripeptide repeating unit (G-X-Y) are hydroxylated in some or all of the chains. In terms of tissue distribution, expressed in bones.

It localises to the secreted. The protein localises to the extracellular space. Its subcellular location is the extracellular matrix. In terms of biological role, type I collagen is a member of group I collagen (fibrillar forming collagen). The sequence is that of Collagen alpha-2(I) chain from Bradypus variegatus (Brown-throated three-fingered sloth).